We begin with the raw amino-acid sequence, 547 residues long: Chaperonin GroEL (547 aa).

ATP contacts are provided by residues 30-33, Lys51, 87-91, Gly415, 479-481, and Asp495; these read TLGP, DGTTT, and NAA.

The protein belongs to the chaperonin (HSP60) family. In terms of assembly, forms a cylinder of 14 subunits composed of two heptameric rings stacked back-to-back. Interacts with the co-chaperonin GroES.

The protein resides in the cytoplasm. The catalysed reaction is ATP + H2O + a folded polypeptide = ADP + phosphate + an unfolded polypeptide.. Functionally, together with its co-chaperonin GroES, plays an essential role in assisting protein folding. The GroEL-GroES system forms a nano-cage that allows encapsulation of the non-native substrate proteins and provides a physical environment optimized to promote and accelerate protein folding. This Acinetobacter baumannii (strain ACICU) protein is Chaperonin GroEL.